The following is a 469-amino-acid chain: Neuraminidase (469 aa).

Residues 1–6 (MNPNQK) are Intravirion-facing. The chain crosses the membrane as a helical span at residues 7–27 (IITIGSICMVVGIISLILQIG). Residues 11–33 (GSICMVVGIISLILQIGNIISIW) form an involved in apical transport and lipid raft association region. Residues 28-469 (NIISIWVSHS…GAELPFSIDK (442 aa)) lie on the Virion surface side of the membrane. The hypervariable stalk region stretch occupies residues 36–90 (HSIQTGNQNHPETCNQSIITYENNTWVNQTYVNISNTNVVAGQDATSVILTGNSS). Residues N50, N58, N63, N68, and N88 are each glycosylated (N-linked (GlcNAc...) asparagine; by host). The head of neuraminidase stretch occupies residues 91-469 (LCPISGWAIY…GAELPFSIDK (379 aa)). Cystine bridges form between C92-C417, C124-C129, C184-C231, C233-C238, C279-C292, C281-C290, C318-C335, and C421-C446. R118 contributes to the substrate binding site. N146 carries N-linked (GlcNAc...) asparagine; by host glycosylation. Residue D151 is the Proton donor/acceptor of the active site. Substrate is bound at residue R152. A glycan (N-linked (GlcNAc...) asparagine; by host) is linked at N235. Substrate is bound at residue 277–278 (EE). R293 is a substrate binding site. The Ca(2+) site is built by D294, G298, D324, and N344. R368 contacts substrate. The active-site Nucleophile is the Y402.

It belongs to the glycosyl hydrolase 34 family. In terms of assembly, homotetramer. Ca(2+) serves as cofactor. N-glycosylated.

The protein localises to the virion membrane. Its subcellular location is the host apical cell membrane. It carries out the reaction Hydrolysis of alpha-(2-&gt;3)-, alpha-(2-&gt;6)-, alpha-(2-&gt;8)- glycosidic linkages of terminal sialic acid residues in oligosaccharides, glycoproteins, glycolipids, colominic acid and synthetic substrates.. Inhibited by the neuraminidase inhibitors zanamivir (Relenza) and oseltamivir (Tamiflu). These drugs interfere with the release of progeny virus from infected cells and are effective against all influenza strains. Resistance to neuraminidase inhibitors is quite rare. Its function is as follows. Catalyzes the removal of terminal sialic acid residues from viral and cellular glycoconjugates. Cleaves off the terminal sialic acids on the glycosylated HA during virus budding to facilitate virus release. Additionally helps virus spread through the circulation by further removing sialic acids from the cell surface. These cleavages prevent self-aggregation and ensure the efficient spread of the progeny virus from cell to cell. Otherwise, infection would be limited to one round of replication. Described as a receptor-destroying enzyme because it cleaves a terminal sialic acid from the cellular receptors. May facilitate viral invasion of the upper airways by cleaving the sialic acid moieties on the mucin of the airway epithelial cells. Likely to plays a role in the budding process through its association with lipid rafts during intracellular transport. May additionally display a raft-association independent effect on budding. Plays a role in the determination of host range restriction on replication and virulence. Sialidase activity in late endosome/lysosome traffic seems to enhance virus replication. The protein is Neuraminidase of Aves (Human).